Here is a 142-residue protein sequence, read N- to C-terminus: Putative 2'-deoxynucleoside 5'-phosphate N-hydrolase 1 (142 aa).

Residues 4 to 10 (FFSGSIR), Tyr19, His36, Glu82, and 106 to 108 (SAM) contribute to the substrate site.

The protein belongs to the 2'-deoxynucleoside 5'-phosphate N-hydrolase 1 family. Monomer and homodimer.

The enzyme catalyses a pyrimidine 2'-deoxyribonucleoside 5'-phosphate + H2O = a pyrimidine nucleobase + 2-deoxy-D-ribose 5-phosphate. The catalysed reaction is a purine 2'-deoxyribonucleoside 5'-phosphate + H2O = a purine nucleobase + 2-deoxy-D-ribose 5-phosphate. Functionally, catalyzes the cleavage of the N-glycosidic bond of deoxyribonucleoside 5'-monophosphates to yield deoxyribose 5-phosphate and a purine or pyrimidine base. This Syntrophotalea carbinolica (strain DSM 2380 / NBRC 103641 / GraBd1) (Pelobacter carbinolicus) protein is Putative 2'-deoxynucleoside 5'-phosphate N-hydrolase 1.